A 143-amino-acid chain; its full sequence is Large ribosomal subunit protein uL11 (143 aa).

It belongs to the universal ribosomal protein uL11 family. Part of the ribosomal stalk of the 50S ribosomal subunit. Interacts with L10 and the large rRNA to form the base of the stalk. L10 forms an elongated spine to which L12 dimers bind in a sequential fashion forming a multimeric L10(L12)X complex. One or more lysine residues are methylated.

Its function is as follows. Forms part of the ribosomal stalk which helps the ribosome interact with GTP-bound translation factors. In Allorhizobium ampelinum (strain ATCC BAA-846 / DSM 112012 / S4) (Agrobacterium vitis (strain S4)), this protein is Large ribosomal subunit protein uL11.